The sequence spans 296 residues: Ribosomal RNA small subunit methyltransferase A (296 aa).

Residues Asn31, Leu33, Gly58, Glu79, Asp111, and Asn136 each contribute to the S-adenosyl-L-methionine site.

This sequence belongs to the class I-like SAM-binding methyltransferase superfamily. rRNA adenine N(6)-methyltransferase family. RsmA subfamily.

The protein localises to the cytoplasm. The catalysed reaction is adenosine(1518)/adenosine(1519) in 16S rRNA + 4 S-adenosyl-L-methionine = N(6)-dimethyladenosine(1518)/N(6)-dimethyladenosine(1519) in 16S rRNA + 4 S-adenosyl-L-homocysteine + 4 H(+). Functionally, specifically dimethylates two adjacent adenosines (A1518 and A1519) in the loop of a conserved hairpin near the 3'-end of 16S rRNA in the 30S particle. May play a critical role in biogenesis of 30S subunits. This chain is Ribosomal RNA small subunit methyltransferase A, found in Lactobacillus delbrueckii subsp. bulgaricus (strain ATCC BAA-365 / Lb-18).